The sequence spans 231 residues: Ribose-5-phosphate isomerase A (231 aa).

Substrate contacts are provided by residues threonine 32 to threonine 35, aspartate 85 to aspartate 88, and lysine 98 to glycine 101. Catalysis depends on glutamate 107, which acts as the Proton acceptor. Position 125 (lysine 125) interacts with substrate.

The protein belongs to the ribose 5-phosphate isomerase family. Homodimer.

It carries out the reaction aldehydo-D-ribose 5-phosphate = D-ribulose 5-phosphate. The protein operates within carbohydrate degradation; pentose phosphate pathway; D-ribose 5-phosphate from D-ribulose 5-phosphate (non-oxidative stage): step 1/1. Its function is as follows. Catalyzes the reversible conversion of ribose-5-phosphate to ribulose 5-phosphate. This Burkholderia orbicola (strain MC0-3) protein is Ribose-5-phosphate isomerase A.